The chain runs to 455 residues: P2X purinoceptor 5 (455 aa).

The Cytoplasmic segment spans residues 1 to 34 (MGQAAWKGFVLSLFDYKTAKFVVAKSKKVGLLYR). Residues 35-55 (VLQLIILLYLLIWVFLIKKSY) form a helical membrane-spanning segment. At 56–341 (QDIDTSLQSA…SIIPTVINIG (286 aa)) the chain is on the extracellular side. ATP-binding residues include lysine 69 and lysine 71. Asparagine 77 carries an N-linked (GlcNAc...) asparagine glycan. 3 disulfides stabilise this stretch: cysteine 118-cysteine 169, cysteine 129-cysteine 152, and cysteine 135-cysteine 163. The N-linked (GlcNAc...) asparagine glycan is linked to asparagine 157. Threonine 189 is an ATP binding site. The N-linked (GlcNAc...) asparagine glycan is linked to asparagine 202. 2 disulfide bridges follow: cysteine 220–cysteine 229 and cysteine 263–cysteine 272. 3 residues coordinate ATP: asparagine 294, arginine 296, and lysine 314. Residues 342–362 (SGLALMGAGAFFCDLVLIYLI) form a helical membrane-spanning segment. The Cytoplasmic segment spans residues 363–455 (RKSEFYRDKK…QSQILHPVKT (93 aa)). A compositionally biased stretch (acidic residues) spans 384 to 401 (NVEVEANEMEQERPEDEP). Residues 384 to 422 (NVEVEANEMEQERPEDEPLERVRQDEQSQELAQSGRKQN) are disordered. Polar residues predominate over residues 412–422 (QELAQSGRKQN).

It belongs to the P2X receptor family. In terms of assembly, functional P2XRs are organized as homomeric and heteromeric trimers. Homotrimer. Forms heterotrimer with P2RX1. In terms of tissue distribution, predominantly expressed in heart but are also present in brain, spinal cord and adrenal gland.

Its subcellular location is the cell membrane. The enzyme catalyses Na(+)(in) = Na(+)(out). It catalyses the reaction Ca(2+)(in) = Ca(2+)(out). It carries out the reaction chloride(in) = chloride(out). With respect to regulation, activated by ATP. Slowly desensitizing. Not activated by ATP agonist alpha/beta-methylene-ATP. Highly sensitive to the antagonists suramin and PPADS. Its function is as follows. ATP-gated nonselective transmembrane cation channel. Permeable to potassium, sodium and calcium. Unlike other P2RX receptors, the P2X5 receptor is also permeable to chloride. Acts as an important regulator of inflammatory-related bone loss and osteoclast multinucleation. The chain is P2X purinoceptor 5 (P2rx5) from Rattus norvegicus (Rat).